The primary structure comprises 257 residues: 24 kDa outer membrane protein (257 aa).

The first 21 residues, 1–21 (MKNKSKLLACCLMALPISSFS), serve as a signal peptide directing secretion.

The protein belongs to the MipA/OmpV family.

The protein localises to the cell outer membrane. The protein is 24 kDa outer membrane protein of Pasteurella multocida (strain Pm70).